The chain runs to 71 residues: ATP synthase F(0) complex subunit e, mitochondrial (71 aa).

Position 34 is an N6-acetyllysine (Lys-34). Ser-68 is subject to Phosphoserine.

Belongs to the ATPase e subunit family. Component of the ATP synthase complex composed at least of ATP5F1A/subunit alpha, ATP5F1B/subunit beta, ATP5MC1/subunit c (homooctomer), MT-ATP6/subunit a, MT-ATP8/subunit 8, ATP5ME/subunit e, ATP5MF/subunit f, ATP5MG/subunit g, ATP5MK/subunit k, ATP5MJ/subunit j, ATP5F1C/subunit gamma, ATP5F1D/subunit delta, ATP5F1E/subunit epsilon, ATP5PF/subunit F6, ATP5PB/subunit b, ATP5PD/subunit d, ATP5PO/subunit OSCP. ATP synthase complex consists of a soluble F(1) head domain (subunits alpha(3) and beta(3)) - the catalytic core - and a membrane F(0) domain - the membrane proton channel (subunits c, a, 8, e, f, g, k and j). These two domains are linked by a central stalk (subunits gamma, delta, and epsilon) rotating inside the F1 region and a stationary peripheral stalk (subunits F6, b, d, and OSCP). As to expression, mammary gland, liver, kidney, heart, spleen, brain and lung.

It is found in the mitochondrion. The protein resides in the mitochondrion inner membrane. Functionally, subunit e, of the mitochondrial membrane ATP synthase complex (F(1)F(0) ATP synthase or Complex V) that produces ATP from ADP in the presence of a proton gradient across the membrane which is generated by electron transport complexes of the respiratory chain. ATP synthase complex consist of a soluble F(1) head domain - the catalytic core - and a membrane F(1) domain - the membrane proton channel. These two domains are linked by a central stalk rotating inside the F(1) region and a stationary peripheral stalk. During catalysis, ATP synthesis in the catalytic domain of F(1) is coupled via a rotary mechanism of the central stalk subunits to proton translocation. In vivo, can only synthesize ATP although its ATP hydrolase activity can be activated artificially in vitro. Part of the complex F(0) domain. The polypeptide is ATP synthase F(0) complex subunit e, mitochondrial (Mus musculus (Mouse)).